A 43-amino-acid polypeptide reads, in one-letter code: Defensin-B (43 aa).

Intrachain disulfides connect Cys-3/Cys-34, Cys-20/Cys-39, and Cys-24/Cys-41.

It is found in the secreted. In terms of biological role, antibacterial protein. Strong activity against the Gram-positive bacteria M.luteus, B.megaterium and S.aureus. Reduced activity against Gram-positive bacterium B.subtilis and weak activity against Gram-negative bacterium X.japonicus. No detectable activity against the Gram-negative bacteria E.asbriae, E.coli, P.aeruginosa and S.marcescens. The sequence is that of Defensin-B from Anomala cuprea (Cupreous chafer beetle).